The chain runs to 220 residues: MKRTKNINRETFRKSWRDYRVAPVALAISAVFMLAGCEKSDETVSMYQNADDCSRTNPSMSEQCTTAYNNALKEAEKTAPKYATREDCVAEFGEAQCTQAPAPAQAGMAAESQSSGSMWMPLMAGYMMGRMMGGSGFAQQPLFTSKNAASPANGKFVDASGKSYGPATAGGRTMTVPKTAMAPKPAVTNTVTRGGFGESVAKQTSMQRSSATSSSRSMGG.

A disordered region spans residues 181–220 (MAPKPAVTNTVTRGGFGESVAKQTSMQRSSATSSSRSMGG). A compositionally biased stretch (low complexity) spans 203–220 (QTSMQRSSATSSSRSMGG).

The protein belongs to the UPF0441 family.

The sequence is that of UPF0441 protein Spro_4274 from Serratia proteamaculans (strain 568).